Here is a 327-residue protein sequence, read N- to C-terminus: Glutaminase (327 aa).

Substrate-binding residues include Ser-92, Asn-143, Asn-195, Tyr-218, Tyr-263, and Val-281.

Belongs to the glutaminase family. As to quaternary structure, homotetramer.

The enzyme catalyses L-glutamine + H2O = L-glutamate + NH4(+). The polypeptide is Glutaminase (Synechocystis sp. (strain ATCC 27184 / PCC 6803 / Kazusa)).